A 153-amino-acid chain; its full sequence is Arachidonate 5-lipoxygenase-activating protein (153 aa).

The Lumenal portion of the chain corresponds to 1 to 8 (MDQETVGN). The helical transmembrane segment at 9-30 (IVLLAIVTLISVVQNGFFAHKV) threads the bilayer. The Cytoplasmic portion of the chain corresponds to 31 to 52 (EHESKTHNGRSFQRTGPLAFER). The chain crosses the membrane as a helical span at residues 53-77 (VYTANQNCVDAYPTFLVMLWSAGLL). Residues 78 to 80 (CSQ) are Lumenal-facing. Residues 81–102 (VPAAFAGLMYLFVRQKYFVGYL) form a helical membrane-spanning segment. The Cytoplasmic segment spans residues 103 to 107 (GERTQ). The stretch at 108 to 115 (STPGYIFG) is an intramembrane region. Residues 116–128 (KRIILFLFAMSLA) traverse the membrane as a helical segment. Residues 129-153 (GILNYFLIAFFGSDFENYIKTVTTT) lie on the Lumenal side of the membrane.

It belongs to the MAPEG family. Homotrimer. Interacts with LTC4S and ALOX5.

The protein localises to the nucleus membrane. It is found in the endoplasmic reticulum membrane. In terms of biological role, required for leukotriene biosynthesis by ALOX5 (5-lipoxygenase). Anchors ALOX5 to the membrane. Binds arachidonic acid, and could play an essential role in the transfer of arachidonic acid to ALOX5. Binds to MK-886, a compound that blocks the biosynthesis of leukotrienes. This chain is Arachidonate 5-lipoxygenase-activating protein (ALOX5AP), found in Ovis aries (Sheep).